A 102-amino-acid polypeptide reads, in one-letter code: Probable non-specific lipid-transfer protein (102 aa).

An N-terminal signal peptide occupies residues Met-1 to Ala-35. Intrachain disulfides connect Cys-37–Cys-71, Cys-45–Cys-59, Cys-60–Cys-95, and Cys-69–Cys-102.

The protein belongs to the plant LTP family. B11E subfamily. Aleurone.

Functionally, potential phospholipid transfer protein. This is Probable non-specific lipid-transfer protein (LTP2) from Hordeum vulgare (Barley).